The sequence spans 962 residues: Protein suppressor of underreplication (962 aa).

Disordered stretches follow at residues 353–413, 438–590, 658–712, 866–900, and 916–962; these read EIVT…TRAA, TPTP…LSGS, NSSH…SPDL, QERT…TQAT, and QTSS…ELFK. Over residues 372 to 382 the composition is skewed to basic residues; sequence PRTKSKKKCSK. Residues 386–395 show a composition bias toward basic and acidic residues; it reads PCKEADLTDS. 2 stretches are compositionally biased toward polar residues: residues 438 to 448 and 480 to 489; these read TPTPSGATTAI and LTRSAESKIN. Over residues 524–552 the composition is skewed to basic and acidic residues; that stretch reads VKQESKAKAKPEQKKKIKTVDKPAQETPK. Basic residues predominate over residues 553-562; that stretch reads RKPGRPRKCK. Residues 564–576 are compositionally biased toward polar residues; the sequence is LTETLGKSKTKPN. Basic residues predominate over residues 673-683; that stretch reads RRTKALKRKRK. Composition is skewed to polar residues over residues 703–712 and 866–880; these read RSATNKSPDL and QERT…NSIV. A compositionally biased stretch (basic residues) spans 885 to 894; that stretch reads KSPKSPKHGA. Residues 916 to 944 show a composition bias toward polar residues; that stretch reads QTSSVESVSAPSTPVNPSTSAAACQTRTA. Residues 953 to 962 are compositionally biased toward basic residues; sequence TKRKRLELFK.

The protein localises to the nucleus. The protein resides in the chromosome. Functionally, required for underreplication of DNA, which is found in many late replicating euchromatic regions of salivary gland polytene chromosomes. Controls chromatin organization in polytene chromosomes. The polypeptide is Protein suppressor of underreplication (SuUR) (Drosophila erecta (Fruit fly)).